The sequence spans 353 residues: Pleckstrin-2 (353 aa).

Met-1 carries the N-acetylmethionine modification. One can recognise a PH 1 domain in the interval Gly-4 to His-104. A Phosphoserine modification is found at Ser-120. A DEP domain is found at Thr-139–Glu-225. The PH 2 domain maps to Thr-247 to Thr-353.

As to expression, ubiquitous. Most abundant in the thymus, large bowel, small bowel, stomach, and prostate.

Its subcellular location is the cell projection. It is found in the lamellipodium membrane. The protein resides in the cytoplasm. It localises to the cytoskeleton. Functionally, may help orchestrate cytoskeletal arrangement. Contribute to lamellipodia formation. Overexpression of pleckstrin 2 causes large lamellipodia and peripheral ruffle formation. This is Pleckstrin-2 (Plek2) from Mus musculus (Mouse).